Reading from the N-terminus, the 413-residue chain is Imidazolonepropionase (413 aa).

Positions 79 and 81 each coordinate Fe(3+). H79 and H81 together coordinate Zn(2+). Positions 88, 151, and 184 each coordinate 4-imidazolone-5-propanoate. Y151 contributes to the N-formimidoyl-L-glutamate binding site. H248 contributes to the Fe(3+) binding site. Position 248 (H248) interacts with Zn(2+). E251 contributes to the 4-imidazolone-5-propanoate binding site. Residue D322 participates in Fe(3+) binding. A Zn(2+)-binding site is contributed by D322. N-formimidoyl-L-glutamate-binding residues include N324 and G326. 4-imidazolone-5-propanoate is bound at residue S327.

Belongs to the metallo-dependent hydrolases superfamily. HutI family. It depends on Zn(2+) as a cofactor. Requires Fe(3+) as cofactor.

The protein localises to the cytoplasm. The enzyme catalyses 4-imidazolone-5-propanoate + H2O = N-formimidoyl-L-glutamate. The protein operates within amino-acid degradation; L-histidine degradation into L-glutamate; N-formimidoyl-L-glutamate from L-histidine: step 3/3. Its function is as follows. Catalyzes the hydrolytic cleavage of the carbon-nitrogen bond in imidazolone-5-propanoate to yield N-formimidoyl-L-glutamate. It is the third step in the universal histidine degradation pathway. This is Imidazolonepropionase from Fusobacterium nucleatum subsp. nucleatum (strain ATCC 25586 / DSM 15643 / BCRC 10681 / CIP 101130 / JCM 8532 / KCTC 2640 / LMG 13131 / VPI 4355).